The primary structure comprises 373 residues: Cobalt-precorrin-5B C(1)-methyltransferase (373 aa).

The protein belongs to the CbiD family.

The enzyme catalyses Co-precorrin-5B + S-adenosyl-L-methionine = Co-precorrin-6A + S-adenosyl-L-homocysteine. Its pathway is cofactor biosynthesis; adenosylcobalamin biosynthesis; cob(II)yrinate a,c-diamide from sirohydrochlorin (anaerobic route): step 6/10. Catalyzes the methylation of C-1 in cobalt-precorrin-5B to form cobalt-precorrin-6A. This is Cobalt-precorrin-5B C(1)-methyltransferase from Halorhodospira halophila (strain DSM 244 / SL1) (Ectothiorhodospira halophila (strain DSM 244 / SL1)).